A 346-amino-acid polypeptide reads, in one-letter code: Transcription initiation factor TFIID subunit 11 (346 aa).

The Histone-fold domain occupies 131 to 329; the sequence is LDKDQTNRFE…RLYRLQSDTL (199 aa). Phosphoserine occurs at positions 236 and 238.

Belongs to the TAF11 family. In terms of assembly, TAF11 heterodimerizes with TAF13, but they do not seem to form a heterotetramer like TAF6/TAF9. The 1.2 MDa TFIID complex is composed of TATA binding protein (TBP) and the 14 TBP-associated factors (one copy of each TAF1, TAF2, TAF3, TAF7, TAF8, TAF11, TAF13, two copies of each TAF4, TAF5, TAF6, TAF9, TAF10, TAF12, and three copies of TAF14), ranging in size from 17 to 150 kDa.

Its subcellular location is the nucleus. Functions as a component of the DNA-binding general transcription factor complex TFIID. Binding of TFIID to a promoter (with or without TATA element) is the initial step in pre-initiation complex (PIC) formation. TFIID plays a key role in the regulation of gene expression by RNA polymerase II through different activities such as transcription activator interaction, core promoter recognition and selectivity, TFIIA and TFIIB interaction, chromatin modification (histone acetylation by TAF1), facilitation of DNA opening and initiation of transcription. The protein is Transcription initiation factor TFIID subunit 11 (TAF11) of Saccharomyces cerevisiae (strain ATCC 204508 / S288c) (Baker's yeast).